A 232-amino-acid polypeptide reads, in one-letter code: Orotidine 5'-phosphate decarboxylase (232 aa).

Substrate is bound by residues aspartate 16, lysine 38, 65–74, threonine 119, arginine 180, glutamine 189, glycine 209, and arginine 210; that span reads DLKLHDIGNT. The active-site Proton donor is the lysine 67.

Belongs to the OMP decarboxylase family. Type 1 subfamily. Homodimer.

It catalyses the reaction orotidine 5'-phosphate + H(+) = UMP + CO2. It functions in the pathway pyrimidine metabolism; UMP biosynthesis via de novo pathway; UMP from orotate: step 2/2. Its function is as follows. Catalyzes the decarboxylation of orotidine 5'-monophosphate (OMP) to uridine 5'-monophosphate (UMP). The protein is Orotidine 5'-phosphate decarboxylase of Methylorubrum extorquens (strain PA1) (Methylobacterium extorquens).